Consider the following 306-residue polypeptide: Tyrosine--tRNA ligase (306 aa).

The L-tyrosine site is built by Tyr32 and Glu36. The short motif at 37–45 is the 'HIGH' region element; sequence PSGKIHLGH. Positions 151 to 158 are tyrosine; the sequence is YPIMQVND. Residue Gln173 participates in L-tyrosine binding. The short motif at 204-208 is the 'KMSKS' region element; sequence KMSSS. Residue Ser207 coordinates ATP. 2 interaction with t-RNA regions span residues 228–231 and 283–288; these read KAYC and HPMDLK.

Belongs to the class-I aminoacyl-tRNA synthetase family. TyrS type 3 subfamily. Homodimer.

It is found in the cytoplasm. The catalysed reaction is tRNA(Tyr) + L-tyrosine + ATP = L-tyrosyl-tRNA(Tyr) + AMP + diphosphate + H(+). Catalyzes the attachment of tyrosine to tRNA(Tyr) in a two-step reaction: tyrosine is first activated by ATP to form Tyr-AMP and then transferred to the acceptor end of tRNA(Tyr). The chain is Tyrosine--tRNA ligase (tyrS) from Methanocaldococcus jannaschii (strain ATCC 43067 / DSM 2661 / JAL-1 / JCM 10045 / NBRC 100440) (Methanococcus jannaschii).